The following is a 149-amino-acid chain: Calmodulin (149 aa).

An N-acetylalanine modification is found at Ala2. EF-hand domains are found at residues 8 to 43 (DQIS…LGQN), 44 to 79 (PTEA…KMKD), 81 to 116 (DSEE…LGEK), and 117 to 149 (LTDE…MMAK). Asp21, Asp23, Asp25, Cys27, Glu32, Asp57, Asp59, Asn61, Thr63, Glu68, Asp94, Asp96, Asn98, and Glu105 together coordinate Ca(2+). Position 116 is an N6,N6,N6-trimethyllysine (Lys116). The Ca(2+) site is built by Asp130, Asp132, Asp134, Gln136, and Glu141.

The protein belongs to the calmodulin family.

Functionally, calmodulin mediates the control of a large number of enzymes, ion channels and other proteins by Ca(2+). Among the enzymes to be stimulated by the calmodulin-Ca(2+) complex are a number of protein kinases and phosphatases. The polypeptide is Calmodulin (CCM1) (Capsicum annuum (Capsicum pepper)).